The following is a 295-amino-acid chain: MPWIQIKLNATNENAELIGDMLMEETGALSVTFLDAHDTPVFEPLPGETRLWGDTDVLALYDAEADTQLIMSQIKASNMLAEGFAYKIEQLEDKDWEREWMDNFHPMKFGQRLWICPSWRDIPDPTAVNVMLDPGLAFGTGTHPTTALCLEWLESLDLSGKTVIDFGCGSGILAIAAIKLGAEKVIGIDIDPQALLASKDNAQRNGVADQLDVYLPQDQPEGLLADVVVANILAAPLRELSSIIKGLVKPNGQLAMSGVLDTQAEDVANYYRDELHIDPIVEQSEWCRISGRKQG.

Positions 146, 167, 189, and 231 each coordinate S-adenosyl-L-methionine.

Belongs to the methyltransferase superfamily. PrmA family.

The protein resides in the cytoplasm. It catalyses the reaction L-lysyl-[protein] + 3 S-adenosyl-L-methionine = N(6),N(6),N(6)-trimethyl-L-lysyl-[protein] + 3 S-adenosyl-L-homocysteine + 3 H(+). Its function is as follows. Methylates ribosomal protein L11. The polypeptide is Ribosomal protein L11 methyltransferase (Vibrio vulnificus (strain CMCP6)).